The sequence spans 441 residues: Proline--tRNA ligase (441 aa).

Belongs to the class-II aminoacyl-tRNA synthetase family. ProS type 2 subfamily. Homodimer.

The protein localises to the cytoplasm. The enzyme catalyses tRNA(Pro) + L-proline + ATP = L-prolyl-tRNA(Pro) + AMP + diphosphate. Its function is as follows. Catalyzes the attachment of proline to tRNA(Pro) in a two-step reaction: proline is first activated by ATP to form Pro-AMP and then transferred to the acceptor end of tRNA(Pro). In Bartonella henselae (strain ATCC 49882 / DSM 28221 / CCUG 30454 / Houston 1) (Rochalimaea henselae), this protein is Proline--tRNA ligase.